Here is a 125-residue protein sequence, read N- to C-terminus: Urotensin-2 (125 aa).

The first 20 residues, 1–20 (MYKLASCCLLFIGFLNPLFS), serve as a signal peptide directing secretion. The propeptide occupies 21–111 (LPLLDSGEVS…HLLARIRKPY (91 aa)). Cysteines 119 and 124 form a disulfide.

Belongs to the urotensin-2 family.

The protein resides in the secreted. Functionally, highly potent vasoconstrictor. This is Urotensin-2 (UTS2) from Macaca mulatta (Rhesus macaque).